A 122-amino-acid chain; its full sequence is Large ribosomal subunit protein uL14 (122 aa).

It belongs to the universal ribosomal protein uL14 family. As to quaternary structure, part of the 50S ribosomal subunit. Forms a cluster with proteins L3 and L19. In the 70S ribosome, L14 and L19 interact and together make contacts with the 16S rRNA in bridges B5 and B8.

Functionally, binds to 23S rRNA. Forms part of two intersubunit bridges in the 70S ribosome. The polypeptide is Large ribosomal subunit protein uL14 (Trichlorobacter lovleyi (strain ATCC BAA-1151 / DSM 17278 / SZ) (Geobacter lovleyi)).